The following is a 594-amino-acid chain: Isocitrate dehydrogenase kinase/phosphatase (594 aa).

Residues 315 to 321 (APGIRGM) and Lys336 each bind ATP. The active site involves Asp371.

Belongs to the AceK family.

The protein resides in the cytoplasm. It carries out the reaction L-seryl-[isocitrate dehydrogenase] + ATP = O-phospho-L-seryl-[isocitrate dehydrogenase] + ADP + H(+). In terms of biological role, bifunctional enzyme which can phosphorylate or dephosphorylate isocitrate dehydrogenase (IDH) on a specific serine residue. This is a regulatory mechanism which enables bacteria to bypass the Krebs cycle via the glyoxylate shunt in response to the source of carbon. When bacteria are grown on glucose, IDH is fully active and unphosphorylated, but when grown on acetate or ethanol, the activity of IDH declines drastically concomitant with its phosphorylation. The protein is Isocitrate dehydrogenase kinase/phosphatase of Klebsiella pneumoniae (strain 342).